The primary structure comprises 170 residues: ATP synthase subunit b (170 aa).

A helical membrane pass occupies residues 3–23 (IKILFFLALPFLAYASEHGGT).

The protein belongs to the ATPase B chain family. As to quaternary structure, F-type ATPases have 2 components, F(1) - the catalytic core - and F(0) - the membrane proton channel. F(1) has five subunits: alpha(3), beta(3), gamma(1), delta(1), epsilon(1). F(0) has three main subunits: a(1), b(2) and c(10-14). The alpha and beta chains form an alternating ring which encloses part of the gamma chain. F(1) is attached to F(0) by a central stalk formed by the gamma and epsilon chains, while a peripheral stalk is formed by the delta and b chains.

Its subcellular location is the cell inner membrane. In terms of biological role, f(1)F(0) ATP synthase produces ATP from ADP in the presence of a proton or sodium gradient. F-type ATPases consist of two structural domains, F(1) containing the extramembraneous catalytic core and F(0) containing the membrane proton channel, linked together by a central stalk and a peripheral stalk. During catalysis, ATP synthesis in the catalytic domain of F(1) is coupled via a rotary mechanism of the central stalk subunits to proton translocation. Functionally, component of the F(0) channel, it forms part of the peripheral stalk, linking F(1) to F(0). This Campylobacter concisus (strain 13826) protein is ATP synthase subunit b.